The chain runs to 581 residues: 2-succinyl-5-enolpyruvyl-6-hydroxy-3-cyclohexene-1-carboxylate synthase (581 aa).

The protein belongs to the TPP enzyme family. MenD subfamily. Homodimer. Requires Mg(2+) as cofactor. The cofactor is Mn(2+). Thiamine diphosphate serves as cofactor.

It catalyses the reaction isochorismate + 2-oxoglutarate + H(+) = 5-enolpyruvoyl-6-hydroxy-2-succinyl-cyclohex-3-ene-1-carboxylate + CO2. It participates in quinol/quinone metabolism; 1,4-dihydroxy-2-naphthoate biosynthesis; 1,4-dihydroxy-2-naphthoate from chorismate: step 2/7. Its pathway is quinol/quinone metabolism; menaquinone biosynthesis. In terms of biological role, catalyzes the thiamine diphosphate-dependent decarboxylation of 2-oxoglutarate and the subsequent addition of the resulting succinic semialdehyde-thiamine pyrophosphate anion to isochorismate to yield 2-succinyl-5-enolpyruvyl-6-hydroxy-3-cyclohexene-1-carboxylate (SEPHCHC). The polypeptide is 2-succinyl-5-enolpyruvyl-6-hydroxy-3-cyclohexene-1-carboxylate synthase (Psychromonas ingrahamii (strain DSM 17664 / CCUG 51855 / 37)).